Here is a 962-residue protein sequence, read N- to C-terminus: UBP9-binding protein bun107 (962 aa).

WD repeat units follow at residues 25–69 (DANC…GKAS), 77–116 (AHSAWVNDIALTHDSEGVISCSSDSTVKLWKPHVLNASCL), 121–162 (EHTD…EVMR), 172–211 (VVGPRSGVYSLAANNNIIANGGLQKDIQLWDCVSKKRITD), 214–253 (GHTDNVRDILISDDGRTILTASSDATIKLWSLRAQKCLFS), and 302–339 (KQDAPVSDIVARQSFIWSTSRDGSILRWKDEPLFNQDV). The span at 568–578 (SPLRIRSRPSP) shows a compositional bias: low complexity. Disordered regions lie at residues 568-615 (SPLR…QIPS) and 702-758 (RAAS…PREL). Positions 707–723 (RVFSTGTSVTSPQALSK) are enriched in polar residues. Ser-717 carries the phosphoserine modification. Low complexity predominate over residues 724–738 (TNNTVNNAANTENNT).

As to quaternary structure, interacts with ubp9 and bun62.

The protein resides in the cytoplasm. Its subcellular location is the cell tip. Functionally, required for the ubp9 recruitment to septa and cell tips but also for its enzymatic activity at these specific locations. This Schizosaccharomyces pombe (strain 972 / ATCC 24843) (Fission yeast) protein is UBP9-binding protein bun107 (bun107).